A 325-amino-acid polypeptide reads, in one-letter code: UPF0164 protein TP_0856 (325 aa).

An N-terminal signal peptide occupies residues 1-28 (MVHYKSVFYKSAALVCGFVLAGASVAIA).

This sequence belongs to the UPF0164 family.

The polypeptide is UPF0164 protein TP_0856 (Treponema pallidum (strain Nichols)).